Consider the following 297-residue polypeptide: Heme A synthase (297 aa).

Over 1–6 (MNRKLS) the chain is Cytoplasmic. The helical transmembrane segment at 7 to 27 (IFSAFVTFTMMIVLLMGGTVT) threads the bilayer. The Extracellular portion of the chain corresponds to 28 to 62 (KTDSGNGCGTDWPLCHGELIPTNPSVETMIEYSHR). C35 and C42 form a disulfide bridge. E58 is an active-site residue. Position 61 (H61) interacts with heme o. The chain crosses the membrane as a helical span at residues 63–83 (AVTGVVGLLIIALCLWTLVAF). At 84 to 90 (KDRLDIK) the chain is on the cytoplasmic side. Residues 91 to 111 (IFAFLAFIFMLIQSIVGAGAV) form a helical membrane-spanning segment. Topologically, residues 112 to 121 (VWQQSDLVMA) are extracellular. A helical transmembrane segment spans residues 122–142 (LHFGISLISFASLLILTILIM). H123 contributes to the heme o binding site. Over 143-160 (ERSGQEFRESVPAFLRKL) the chain is Cytoplasmic. A helical transmembrane segment spans residues 161-181 (LYGLLIYTLIVVYTGAFVRHV). The Extracellular portion of the chain corresponds to 182-201 (GATYACVGWPVCSQPTMTFE). A disulfide bridge links C187 with C193. The chain crosses the membrane as a helical span at residues 202–222 (AWVQMIHRILAGLLFFYTLFV). H208 lines the heme b pocket. Topologically, residues 223 to 236 (HYTAIRLKHRTSRT) are cytoplasmic. The chain crosses the membrane as a helical span at residues 237–257 (GMLFATFFISCQVATGAWIVL). Topologically, residues 258 to 262 (GGHAT) are extracellular. A helical membrane pass occupies residues 263–283 (YVPLLHAFLITCYFGVISYLA). H268 is a binding site for heme b. At 284–297 (YHAFRTRKKDSRLR) the chain is on the cytoplasmic side.

It belongs to the COX15/CtaA family. Type 1 subfamily. In terms of assembly, interacts with CtaB. Heme b is required as a cofactor.

It localises to the cell membrane. It catalyses the reaction Fe(II)-heme o + 2 A + H2O = Fe(II)-heme a + 2 AH2. Its pathway is porphyrin-containing compound metabolism; heme A biosynthesis; heme A from heme O: step 1/1. Its function is as follows. Catalyzes the conversion of heme O to heme A by two successive hydroxylations of the methyl group at C8. The first hydroxylation forms heme I, the second hydroxylation results in an unstable dihydroxymethyl group, which spontaneously dehydrates, resulting in the formyl group of heme A. The sequence is that of Heme A synthase from Exiguobacterium sibiricum (strain DSM 17290 / CCUG 55495 / CIP 109462 / JCM 13490 / 255-15).